Consider the following 471-residue polypeptide: MLYAVRVRGIYATALVALALKKGYLLSDLSKTMLSRVEVPVSTRPPNITVKHGEESRDEIVIHAFPYEAGERFEADLLEEVGHAAVRRSLLGLRSVVDARAAEGCRAEGPGGVLIIVKGGECPQPGSMVRVTVVRSPPGSDVVEGRVGVELTGLTVRVMHPGSGVRISRHLTSEDAAKALKAVEASGIDLNQFSVHIRSGARLASEGDISDEIRRLAREAERLWREGPGGEPAVLSRGEYLSLVYLPSTAKHVMDGLRTSLYPTVNNHHSLKSWSSEAEGLLTDFAEEGVREGLWGGEAGDLIVRFISSRLVGRTAVVLHRRPDGETIRLGPFRVSSYRPSSGRGGEIVLERTFRSPGVYDGLGLERRPGDRGVTHVYMGDWLTIHEYYDKSGRLLGVYANINTPPEVGFQGLKYLDLLVDVVKRPGEEPETIDQGELEKACRSGLLTDRLCEEAARQAERASGLLQSRYP.

This sequence belongs to the FAU-1 family.

Functionally, probable RNase involved in rRNA stability through maturation and/or degradation of precursor rRNAs. Binds to RNA in loop regions with AU-rich sequences. The polypeptide is Probable ribonuclease FAU-1 (Aeropyrum pernix (strain ATCC 700893 / DSM 11879 / JCM 9820 / NBRC 100138 / K1)).